A 1705-amino-acid polypeptide reads, in one-letter code: Clathrin heavy chain 1 (1705 aa).

An N-acetylalanine modification is found at A2. Residues 2 to 492 form a globular terminal domain region; that stretch reads AAANAPIIMK…VDNDLALKIY (491 aa). WD40-like repeat stretches follow at residues 25 to 67, 68 to 113, 114 to 155, 156 to 205, 206 to 270, 271 to 314, and 315 to 343; these read FITF…RPIT, ADSA…MPEQ, VAFW…ANLA, NNQI…QALE, AHAA…PDFA, DDFP…ISPD, and PIFLTSEASSVGGFYAINRRGQVLLATVN. The interval 462 to 478 is binding site for the uncoating ATPase, involved in lattice disassembly; it reads ENWLAEDKLECSEELGD. The tract at residues 493–536 is flexible linker; the sequence is IKARATPKVVAAFAERREFDKILIYSKQVGYTPDYMFLLQTILR. A distal segment region spans residues 537 to 648; the sequence is TDPQGAVNFA…QSLKHYSELP (112 aa). Positions 537 to 1705 are heavy chain arm; the sequence is TDPQGAVNFA…PYGMPPMGGY (1169 aa). CHCR repeat units lie at residues 551–697, 700–842, 847–986, 993–1138, 1142–1283, 1288–1434, and 1437–1580; these read QMEG…QIIV, CKEY…PEDF, ILSV…QLID, LPES…VSDA, FIRA…FRLA, LNII…DIIN, and LNVL…KECF. The segment at 653-1705 is proximal segment; it reads VIVNTHAIEP…PYGMPPMGGY (1053 aa). Residues 1227-1536 form an involved in binding clathrin light chain region; sequence AAKIIYAFIS…YIYKKAGRWK (310 aa). The trimerization stretch occupies residues 1564–1705; sequence AEQLLVYFIE…PYGMPPMGGY (142 aa).

This sequence belongs to the clathrin heavy chain family. In terms of assembly, clathrin triskelions, composed of 3 heavy chains and 3 light chains, are the basic subunits of the clathrin coat. Interacts with SCYL2B.

Its subcellular location is the cytoplasmic vesicle membrane. It is found in the membrane. It localises to the coated pit. Clathrin is the major protein of the polyhedral coat of coated pits and vesicles. Mediates endocytosis and is required for a correct polar distribution of PIN auxin transporters. This is Clathrin heavy chain 1 from Arabidopsis thaliana (Mouse-ear cress).